A 202-amino-acid polypeptide reads, in one-letter code: LexA repressor (202 aa).

A DNA-binding region (H-T-H motif) is located at residues 28–48 (RAEIAQELGFKSPNAAEEHLK). Catalysis depends on for autocatalytic cleavage activity residues Ser-123 and Lys-160.

It belongs to the peptidase S24 family. In terms of assembly, homodimer.

The catalysed reaction is Hydrolysis of Ala-|-Gly bond in repressor LexA.. Functionally, represses a number of genes involved in the response to DNA damage (SOS response), including recA and lexA. In the presence of single-stranded DNA, RecA interacts with LexA causing an autocatalytic cleavage which disrupts the DNA-binding part of LexA, leading to derepression of the SOS regulon and eventually DNA repair. In Pseudomonas putida (Arthrobacter siderocapsulatus), this protein is LexA repressor.